The sequence spans 590 residues: Putative ABC transporter ATP-binding protein MM_3016 (590 aa).

ABC transporter domains follow at residues Val-11–Ile-251 and Val-317–Ile-550. Residues Gly-45 to Ser-52 and Gly-350 to Thr-357 each bind ATP.

This sequence belongs to the ABC transporter superfamily.

It is found in the cell membrane. Probably part of an ABC transporter complex. Responsible for energy coupling to the transport system. This chain is Putative ABC transporter ATP-binding protein MM_3016, found in Methanosarcina mazei (strain ATCC BAA-159 / DSM 3647 / Goe1 / Go1 / JCM 11833 / OCM 88) (Methanosarcina frisia).